The sequence spans 1165 residues: Integrin alpha-L (1165 aa).

An N-terminal signal peptide occupies residues 1–23 (MNSCIIVLRLLLSGPFVFAPAWS). The Extracellular segment spans residues 24–1084 (YNLDVRHVQN…MKVDLVYEKE (1061 aa)). 2 FG-GAP repeats span residues 29 to 80 (RHVQ…DCLP) and 81 to 138 (VTLS…GPVL). Asn33 is a glycosylation site (N-linked (GlcNAc...) asparagine). A disulfide bridge links Cys71 with Cys78. Asn86 carries N-linked (GlcNAc...) asparagine glycosylation. The cysteines at positions 108 and 126 are disulfide-linked. The region spanning 153-324 (DLVFLFDGSM…EKLKDLFTEL (172 aa)) is the VWFA domain. N-linked (GlcNAc...) asparagine glycosylation occurs at Asn185. FG-GAP repeat units lie at residues 335-386 (SKQD…SSTF), 387-442 (VGNE…GGPW), 443-503 (SQIQ…EFQM), 504-560 (VSEL…GLSP), and 564-624 (QRIE…FSPA). The Ca(2+) site is built by Asp465, Asp467, Asp469, Glu473, Asp527, Asn529, Asp531, Asp535, Asp587, Asp591, and Asp595. N-linked (GlcNAc...) asparagine glycans are attached at residues Asn646, Asn667, and Asn723. Cysteines 650 and 704 form a disulfide. 2 cysteine pairs are disulfide-bonded: Cys768/Cys774 and Cys842/Cys858. N-linked (GlcNAc...) asparagine glycans are attached at residues Asn859, Asn894, and Asn929. Cystine bridges form between Cys994–Cys1009 and Cys1017–Cys1048. N-linked (GlcNAc...) asparagine glycosylation is found at Asn1056 and Asn1067. A helical transmembrane segment spans residues 1085–1105 (MLYLYVLSGIGGLLLLFLIFI). Residues 1106-1165 (ALYKVGFFKRNLKEKMEANVDASSEIPGEDAGQPELEKECKDPGCLEPLQKTDEDGSGGD) are Cytoplasmic-facing. A GFFKR motif motif is present at residues 1111 to 1115 (GFFKR). The segment at 1123–1165 (ANVDASSEIPGEDAGQPELEKECKDPGCLEPLQKTDEDGSGGD) is disordered. Positions 1140 to 1159 (ELEKECKDPGCLEPLQKTDE) are enriched in basic and acidic residues.

The protein belongs to the integrin alpha chain family. Heterodimer of an alpha and a beta subunit. The ITGAL alpha subunit associates with the ITGB2 beta subunit. Interacts with THBD. Interacts with CD226. In terms of processing, in resting T-cells, up to 40% of surface ITGAL is constitutively phosphorylated. Phosphorylation causes conformational changes needed for ligand binding and is necessary for the activation by some physiological agents.

The protein localises to the cell membrane. Its function is as follows. Integrin ITGAL/ITGB2 is a receptor for ICAM1, ICAM2, ICAM3 and ICAM4. Integrin ITGAL/ITGB2 is a receptor for F11R. Integrin ITGAL/ITGB2 is a receptor for the secreted form of ubiquitin-like protein ISG15; the interaction is mediated by ITGAL. Involved in a variety of immune phenomena including leukocyte-endothelial cell interaction, cytotoxic T-cell mediated killing, and antibody dependent killing by granulocytes and monocytes. Contributes to natural killer cell cytotoxicity. Involved in leukocyte adhesion and transmigration of leukocytes including T-cells and neutrophils. Acts as a platform at the immunological synapse to translate TCR engagement and density of the ITGAL ligand ICAM1 into graded adhesion. Required for generation of common lymphoid progenitor cells in bone marrow, indicating the role in lymphopoiesis. Integrin ITGAL/ITGB2 in association with ICAM3, contributes to apoptotic neutrophil phagocytosis by macrophages. This chain is Integrin alpha-L, found in Bos taurus (Bovine).